Reading from the N-terminus, the 118-residue chain is Large ribosomal subunit protein bL20 (118 aa).

This sequence belongs to the bacterial ribosomal protein bL20 family.

Its function is as follows. Binds directly to 23S ribosomal RNA and is necessary for the in vitro assembly process of the 50S ribosomal subunit. It is not involved in the protein synthesizing functions of that subunit. This Phenylobacterium zucineum (strain HLK1) protein is Large ribosomal subunit protein bL20.